The chain runs to 125 residues: Protein U2 (125 aa).

The protein belongs to the nanovirus U2 protein family.

This chain is Protein U2 (DNA-U2), found in Milk vetch dwarf virus (isolate N) (MDV).